A 132-amino-acid chain; its full sequence is uncharacterized protein (132 aa).

Positions 113–132 (LDPQSPLHSPPLSTSPDSRR) are disordered.

This is an uncharacterized protein from Saccharomyces cerevisiae (strain ATCC 204508 / S288c) (Baker's yeast).